The following is an 856-amino-acid chain: Subtilisin-like protease SBT2.2 (856 aa).

A signal peptide spans 1–21 (MRRVLMVNFGVLLLFCFGVLS). The propeptide at 22–159 (NSFGQDNGGD…IVLDFSVRTA (138 aa)) is activation peptide. Asn-35 and Asn-85 each carry an N-linked (GlcNAc...) asparagine glycan. An Inhibitor I9 domain is found at 40 to 159 (VYIVTLRQAS…IVLDFSVRTA (120 aa)). The 546-residue stretch at 164–709 (PQFMGLPKGA…NGFVNATAAL (546 aa)) folds into the Peptidase S8 domain. Residue Asp-193 is the Charge relay system of the active site. Residues Asn-204 and Asn-255 are each glycosylated (N-linked (GlcNAc...) asparagine). The Charge relay system role is filled by His-269. 5 N-linked (GlcNAc...) asparagine glycosylation sites follow: Asn-412, Asn-441, Asn-495, Asn-540, and Asn-568. Positions 432 to 528 (MISALDALKN…MDMPGIIIPS (97 aa)) constitute a PA domain. Residue Ser-634 is the Charge relay system of the active site. N-linked (GlcNAc...) asparagine glycosylation is found at Asn-704, Asn-730, Asn-738, Asn-748, Asn-767, Asn-782, and Asn-823.

It belongs to the peptidase S8 family.

The protein resides in the secreted. The chain is Subtilisin-like protease SBT2.2 from Arabidopsis thaliana (Mouse-ear cress).